We begin with the raw amino-acid sequence, 403 residues long: Phosphoglycerate kinase (403 aa).

Substrate contacts are provided by residues 22 to 24 (DLN), arginine 37, 60 to 63 (HLGR), arginine 119, and arginine 156. ATP-binding positions include lysine 206, glycine 302, glutamate 333, and 359–362 (GGDS).

This sequence belongs to the phosphoglycerate kinase family. As to quaternary structure, monomer.

Its subcellular location is the cytoplasm. The enzyme catalyses (2R)-3-phosphoglycerate + ATP = (2R)-3-phospho-glyceroyl phosphate + ADP. It participates in carbohydrate degradation; glycolysis; pyruvate from D-glyceraldehyde 3-phosphate: step 2/5. The sequence is that of Phosphoglycerate kinase from Streptomyces griseus subsp. griseus (strain JCM 4626 / CBS 651.72 / NBRC 13350 / KCC S-0626 / ISP 5235).